The chain runs to 239 residues: Ribosome assembly factor mrt4 (239 aa).

It belongs to the universal ribosomal protein uL10 family. In terms of assembly, associates with the pre-60S ribosomal particle.

The protein resides in the nucleus. The protein localises to the nucleolus. It localises to the cytoplasm. Functionally, component of the ribosome assembly machinery. Nuclear paralog of the ribosomal protein P0, it binds pre-60S subunits at an early stage of assembly in the nucleolus, and is replaced by P0 in cytoplasmic pre-60S subunits and mature 80S ribosomes. The sequence is that of Ribosome assembly factor mrt4 from Candida glabrata (strain ATCC 2001 / BCRC 20586 / JCM 3761 / NBRC 0622 / NRRL Y-65 / CBS 138) (Yeast).